The primary structure comprises 172 residues: Ribosome maturation factor RimM (172 aa).

Residues 96–168 enclose the PRC barrel domain; the sequence is EGEFYYHQII…RVDVELMEGL (73 aa).

It belongs to the RimM family. As to quaternary structure, binds ribosomal protein uS19.

The protein resides in the cytoplasm. An accessory protein needed during the final step in the assembly of 30S ribosomal subunit, possibly for assembly of the head region. Essential for efficient processing of 16S rRNA. May be needed both before and after RbfA during the maturation of 16S rRNA. It has affinity for free ribosomal 30S subunits but not for 70S ribosomes. The polypeptide is Ribosome maturation factor RimM (Streptococcus pyogenes serotype M18 (strain MGAS8232)).